The sequence spans 507 residues: Probable cytosol aminopeptidase (507 aa).

K269 and D274 together coordinate Mn(2+). K281 is an active-site residue. Positions 292, 351, and 353 each coordinate Mn(2+). R355 is an active-site residue.

Belongs to the peptidase M17 family. Requires Mn(2+) as cofactor.

It localises to the cytoplasm. It carries out the reaction Release of an N-terminal amino acid, Xaa-|-Yaa-, in which Xaa is preferably Leu, but may be other amino acids including Pro although not Arg or Lys, and Yaa may be Pro. Amino acid amides and methyl esters are also readily hydrolyzed, but rates on arylamides are exceedingly low.. The catalysed reaction is Release of an N-terminal amino acid, preferentially leucine, but not glutamic or aspartic acids.. Functionally, presumably involved in the processing and regular turnover of intracellular proteins. Catalyzes the removal of unsubstituted N-terminal amino acids from various peptides. The protein is Probable cytosol aminopeptidase of Chromohalobacter salexigens (strain ATCC BAA-138 / DSM 3043 / CIP 106854 / NCIMB 13768 / 1H11).